The primary structure comprises 187 residues: GMP synthase [glutamine-hydrolyzing] subunit A (187 aa).

Residues 1–187 (MILIIDNHGQ…KNFAKLCGEL (187 aa)) enclose the Glutamine amidotransferase type-1 domain. C76 acts as the Nucleophile in catalysis. Active-site residues include H164 and E166.

In terms of assembly, heterodimer composed of a glutamine amidotransferase subunit (A) and a GMP-binding subunit (B).

The enzyme catalyses XMP + L-glutamine + ATP + H2O = GMP + L-glutamate + AMP + diphosphate + 2 H(+). It participates in purine metabolism; GMP biosynthesis; GMP from XMP (L-Gln route): step 1/1. Its function is as follows. Catalyzes the synthesis of GMP from XMP. The chain is GMP synthase [glutamine-hydrolyzing] subunit A from Methanopyrus kandleri (strain AV19 / DSM 6324 / JCM 9639 / NBRC 100938).